A 122-amino-acid polypeptide reads, in one-letter code: Small ribosomal subunit protein uS13 (122 aa).

The tract at residues 93–122 (RLSLPVRGQRTKTNSRTRKGKRKTVAGKKK) is disordered. The span at 101-122 (QRTKTNSRTRKGKRKTVAGKKK) shows a compositional bias: basic residues.

It belongs to the universal ribosomal protein uS13 family. In terms of assembly, part of the 30S ribosomal subunit. Forms a loose heterodimer with protein S19. Forms two bridges to the 50S subunit in the 70S ribosome.

In terms of biological role, located at the top of the head of the 30S subunit, it contacts several helices of the 16S rRNA. In the 70S ribosome it contacts the 23S rRNA (bridge B1a) and protein L5 of the 50S subunit (bridge B1b), connecting the 2 subunits; these bridges are implicated in subunit movement. Contacts the tRNAs in the A and P-sites. This chain is Small ribosomal subunit protein uS13, found in Chlamydia caviae (strain ATCC VR-813 / DSM 19441 / 03DC25 / GPIC) (Chlamydophila caviae).